The chain runs to 874 residues: Alanine--tRNA ligase (874 aa).

Residues histidine 563, histidine 567, cysteine 665, and histidine 669 each coordinate Zn(2+).

It belongs to the class-II aminoacyl-tRNA synthetase family. Requires Zn(2+) as cofactor.

Its subcellular location is the cytoplasm. It catalyses the reaction tRNA(Ala) + L-alanine + ATP = L-alanyl-tRNA(Ala) + AMP + diphosphate. In terms of biological role, catalyzes the attachment of alanine to tRNA(Ala) in a two-step reaction: alanine is first activated by ATP to form Ala-AMP and then transferred to the acceptor end of tRNA(Ala). Also edits incorrectly charged Ser-tRNA(Ala) and Gly-tRNA(Ala) via its editing domain. The polypeptide is Alanine--tRNA ligase (Actinobacillus pleuropneumoniae serotype 5b (strain L20)).